The chain runs to 323 residues: tRNA-dihydrouridine(20/20a) synthase (323 aa).

FMN-binding positions include Pro14–Leu16 and Gln66. The active-site Proton donor is the Cys96. FMN is bound by residues Lys135, His166, Asn206 to Gly208, and Gly228 to Arg229.

This sequence belongs to the Dus family. DusA subfamily. FMN serves as cofactor.

It carries out the reaction 5,6-dihydrouridine(20) in tRNA + NADP(+) = uridine(20) in tRNA + NADPH + H(+). The catalysed reaction is 5,6-dihydrouridine(20) in tRNA + NAD(+) = uridine(20) in tRNA + NADH + H(+). It catalyses the reaction 5,6-dihydrouridine(20a) in tRNA + NADP(+) = uridine(20a) in tRNA + NADPH + H(+). The enzyme catalyses 5,6-dihydrouridine(20a) in tRNA + NAD(+) = uridine(20a) in tRNA + NADH + H(+). In terms of biological role, catalyzes the synthesis of 5,6-dihydrouridine (D), a modified base found in the D-loop of most tRNAs, via the reduction of the C5-C6 double bond in target uridines. Specifically modifies U20 and U20a in tRNAs. The sequence is that of tRNA-dihydrouridine(20/20a) synthase from Haemophilus ducreyi (strain 35000HP / ATCC 700724).